A 554-amino-acid polypeptide reads, in one-letter code: DM7 family protein GG17593 (554 aa).

It belongs to the DM7 family.

The chain is DM7 family protein GG17593 from Drosophila erecta (Fruit fly).